A 1203-amino-acid chain; its full sequence is Metabotropic glutamate receptor 5 (1203 aa).

A signal peptide spans 1-20; sequence MVLLLILSVLLLKEDVRGSA. The Extracellular segment spans residues 21–579; that stretch reads QSSERRVVAH…QYLRWGDPEP (559 aa). An intrachain disulfide couples Cys57 to Cys99. Tyr64 is an L-glutamate binding site. An N-linked (GlcNAc...) asparagine glycan is attached at Asn88. Residues Ser151 and 172–174 each bind L-glutamate; that span reads SAT. Asn209 carries N-linked (GlcNAc...) asparagine glycosylation. An L-glutamate-binding site is contributed by Tyr222. 8 disulfide bridges follow: Cys240–Cys529, Cys275–Cys277, Cys364–Cys380, Cys418–Cys425, Cys510–Cys530, Cys514–Cys533, Cys536–Cys548, and Cys551–Cys564. L-glutamate is bound at residue Asp304. N-linked (GlcNAc...) asparagine glycans are attached at residues Asn377 and Asn381. Lys395 serves as a coordination point for L-glutamate. Residue Asn444 is glycosylated (N-linked (GlcNAc...) asparagine). Residues 580-602 form a helical membrane-spanning segment; it reads IAAVVFACLGLLATLFVTVIFII. Over 603 to 612 the chain is Cytoplasmic; it reads YRDTPVVKSS. The chain crosses the membrane as a helical span at residues 613 to 635; the sequence is SRELCYIILAGICLGYLCTFCLI. Residues 636–643 are Extracellular-facing; that stretch reads AKPKQIYC. The cysteines at positions 643 and 732 are disulfide-linked. A helical transmembrane segment spans residues 644–666; it reads YLQRIGIGLSPAMSYSALVTKTN. At 667–692 the chain is on the cytoplasmic side; it reads RIARILAGSKKKICTKKPRFMSACAQ. Residues 693–713 traverse the membrane as a helical segment; that stretch reads LVIAFILICIQLGIIVALFIM. Topologically, residues 714 to 736 are extracellular; sequence EPPDIMHDYPSIREVYLICNTTN. N-linked (GlcNAc...) asparagine glycosylation occurs at Asn733. Residues 737–758 form a helical membrane-spanning segment; sequence LGVVTPLGYNGLLILSCTFYAF. At 759 to 771 the chain is on the cytoplasmic side; sequence KTRNVPANFNEAK. The chain crosses the membrane as a helical span at residues 772–794; sequence YIAFTMYTTCIIWLAFVPIYFGS. Residues 795–797 are Extracellular-facing; sequence NYK. A helical membrane pass occupies residues 798–819; the sequence is IITMCFSVSLSATVALGCMFVP. Topologically, residues 820–1203 are cytoplasmic; sequence KVYIILAKPE…RDYTQSSSSL (384 aa). Ser860 is subject to Phosphoserine. Arg868 carries the post-translational modification Omega-N-methylarginine. Disordered stretches follow at residues 892 to 970, 1003 to 1054, and 1122 to 1182; these read FTPK…GSGP, EESF…GSLM, and GAQG…ALCI. Over residues 905 to 920 the composition is skewed to polar residues; that stretch reads TMSSSNGKSVTWAQNE. An Omega-N-methylarginine modification is found at Arg924. Over residues 1007–1017 the composition is skewed to low complexity; sequence PAAARPRSPSP. A phosphoserine mark is found at Ser1014 and Ser1016. 2 stretches are compositionally biased toward polar residues: residues 1039–1054 and 1165–1176; these read HSET…GSLM and DSGSTTPNSPVS.

The protein belongs to the G-protein coupled receptor 3 family. Interacts with RYR1, RYR2, ITPR1, SHANK1 and SHANK3. The PPXXF motif binds HOMER1, HOMER2 and HOMER3. Interacts with SIAH1 and TAMALIN. Interacts with NCDN. Interacts with NECAB2. Interacts with CAMK2A. As to expression, widely distributed in neuronal cells of the central nervous system.

Its subcellular location is the cell membrane. In terms of biological role, G-protein coupled receptor for glutamate. Ligand binding causes a conformation change that triggers signaling via guanine nucleotide-binding proteins (G proteins) and modulates the activity of down-stream effectors. Signaling activates a phosphatidylinositol-calcium second messenger system and generates a calcium-activated chloride current. Plays an important role in the regulation of synaptic plasticity and the modulation of the neural network activity. The chain is Metabotropic glutamate receptor 5 (Grm5) from Rattus norvegicus (Rat).